Consider the following 263-residue polypeptide: Protein IQ-DOMAIN 9 (263 aa).

Positions 16–41 are disordered; the sequence is SKQGTEKKKTSAVKPKKGSKKKGTSL. A Nuclear localization signal 1 motif is present at residues 21-28; that stretch reads EKKKTSAV. Positions 25-38 are enriched in basic residues; sequence TSAVKPKKGSKKKG. The IQ domain occupies 46-75; that stretch reads EDWAATRIQTAFKAYKARKSLRRLKGIARA. The segment at 59 to 78 is calmodulin-binding; sequence AYKARKSLRRLKGIARAKLS. Positions 107–114 match the Nuclear localization signal 2 motif; that stretch reads ARRVCMVT. The tract at residues 216–263 is disordered; the sequence is TPKKPKSSKTDSNSPAKRTVSLSSVPAKTPFPGARNTVKPRRLSFPGA. Over residues 226–241 the composition is skewed to polar residues; that stretch reads DSNSPAKRTVSLSSVP.

It belongs to the IQD family. Binds to multiple calmodulin (CaM) in the presence of Ca(2+) and CaM-like proteins.

The protein resides in the nucleus. Its subcellular location is the nuclear body. May be involved in cooperative interactions with calmodulins or calmodulin-like proteins. Recruits calmodulin proteins to microtubules, thus being a potential scaffold in cellular signaling and trafficking. May associate with nucleic acids and regulate gene expression at the transcriptional or post-transcriptional level. The chain is Protein IQ-DOMAIN 9 from Arabidopsis thaliana (Mouse-ear cress).